The chain runs to 143 residues: Photosystem I reaction center subunit IV B, chloroplastic (143 aa).

The N-terminal 51 residues, 1-51, are a transit peptide targeting the chloroplast; sequence MASSSMASAASGFMVATPNIATSNTAPRTSMLFFSSSKNNTTTNFPRLVVR. Over residues 56-75 the composition is skewed to low complexity; that stretch reads AAPPAATATAEGEAPPAKAA. The segment at 56-86 is disordered; sequence AAPPAATATAEGEAPPAKAAKPPPIGPKRGT.

This sequence belongs to the PsaE family. Post-translationally, 2 isoforms exists (ratio 1:1). With or without the N-terminal alanine.

The protein resides in the plastid. The protein localises to the chloroplast thylakoid membrane. Functionally, stabilizes the interaction between PsaC and the PSI core, assists the docking of the ferredoxin to PSI and interacts with ferredoxin-NADP oxidoreductase. The chain is Photosystem I reaction center subunit IV B, chloroplastic (PSAEB) from Nicotiana sylvestris (Wood tobacco).